The primary structure comprises 449 residues: Ribosomal protein uS12 methylthiotransferase RimO (449 aa).

Positions 5–116 (PTIAISHLGC…IVDVVQRVEN (112 aa)) constitute an MTTase N-terminal domain. [4Fe-4S] cluster contacts are provided by cysteine 14, cysteine 50, cysteine 79, cysteine 154, cysteine 158, and cysteine 161. The 230-residue stretch at 140–369 (TTTEGVAYLR…MEVQQPISIK (230 aa)) folds into the Radical SAM core domain. The TRAM domain maps to 372 to 438 (QNCIGQTVPV…VYDLYGKTNL (67 aa)).

This sequence belongs to the methylthiotransferase family. RimO subfamily. Requires [4Fe-4S] cluster as cofactor.

It localises to the cytoplasm. It carries out the reaction L-aspartate(89)-[ribosomal protein uS12]-hydrogen + (sulfur carrier)-SH + AH2 + 2 S-adenosyl-L-methionine = 3-methylsulfanyl-L-aspartate(89)-[ribosomal protein uS12]-hydrogen + (sulfur carrier)-H + 5'-deoxyadenosine + L-methionine + A + S-adenosyl-L-homocysteine + 2 H(+). Functionally, catalyzes the methylthiolation of an aspartic acid residue of ribosomal protein uS12. In Rippkaea orientalis (strain PCC 8801 / RF-1) (Cyanothece sp. (strain PCC 8801)), this protein is Ribosomal protein uS12 methylthiotransferase RimO.